Here is a 350-residue protein sequence, read N- to C-terminus: Probable transposase-like protein At4g04430 (350 aa).

Disordered stretches follow at residues 1–57 (MPSD…PSVN) and 307–328 (QIGQANPNEPPVSAAPEPQVAN). The span at 30–43 (SGVQGSGSRSGSTV) shows a compositional bias: low complexity.

It belongs to the transposase 24 family.

This is Probable transposase-like protein At4g04430 from Arabidopsis thaliana (Mouse-ear cress).